Consider the following 113-residue polypeptide: Thioredoxin H-type (113 aa).

The region spanning 2-112 is the Thioredoxin domain; the sequence is GGSVIVIDSK…LKALVAKHAA (111 aa). Residues C37 and C40 each act as nucleophile in the active site. A disulfide bond links C37 and C40.

This sequence belongs to the thioredoxin family. Plant H-type subfamily.

The protein localises to the cytoplasm. In terms of biological role, participates in various redox reactions through the reversible oxidation of the active center dithiol to a disulfide. The H form is known to activate a number of cytosolic enzymes. This Chlamydomonas reinhardtii (Chlamydomonas smithii) protein is Thioredoxin H-type (TRXH).